The chain runs to 102 residues: RNA-binding protein Hfq (102 aa).

In terms of domain architecture, Sm spans 9-68 (DPFLNALRRERVPVSIYLVNGIKLQGQIESFDQFVILLKNTVSQMVYKHAISTVVPSRPV). Positions 63 to 102 (VPSRPVSHHSNNAGGGTSSNYHHGSSAQGTSAQQDSEETE) are disordered. The span at 70-96 (HHSNNAGGGTSSNYHHGSSAQGTSAQQ) shows a compositional bias: polar residues.

The protein belongs to the Hfq family. Homohexamer.

In terms of biological role, RNA chaperone that binds small regulatory RNA (sRNAs) and mRNAs to facilitate mRNA translational regulation in response to envelope stress, environmental stress and changes in metabolite concentrations. Also binds with high specificity to tRNAs. This chain is RNA-binding protein Hfq, found in Citrobacter koseri (strain ATCC BAA-895 / CDC 4225-83 / SGSC4696).